Consider the following 511-residue polypeptide: Coiled-coil domain-containing protein 125 (511 aa).

The segment covering 1–12 has biased composition (polar residues); sequence MSKVARSSSESD. The segment at 1-110 is disordered; sequence MSKVARSSSE…TVDSNSELSN (110 aa). A compositionally biased stretch (basic and acidic residues) spans 43 to 54; it reads EFSHRSRKRSDG. A compositionally biased stretch (polar residues) spans 83–108; the sequence is QDTFPQVSRISNYRRQSSTVDSNSEL. Coiled coils occupy residues 105 to 243 and 293 to 325; these read NSEL…LEAL and RMAA…MADA. Phosphoserine is present on Ser-504.

It is found in the cytoplasm. Functionally, may be involved in the regulation of cell migration. The sequence is that of Coiled-coil domain-containing protein 125 (CCDC125) from Homo sapiens (Human).